The sequence spans 458 residues: Protein amnionless (458 aa).

An N-terminal signal peptide occupies residues 1 to 19 (MGALGRVLLWLQLCAMTRA). Over 20-362 (AYKLWVPNTS…ELNQSSSGAG (343 aa)) the chain is Extracellular. A glycan (N-linked (GlcNAc...) asparagine) is linked at N27. 6 cysteine pairs are disulfide-bonded: C43–C96, C137–C213, C205–C211, C223–C249, C234–C250, and C239–C253. An interaction with CUBN region spans residues 67 to 87 (SDMLLPLDGELVLASGAALSA). Residues 203–254 (QACTDASGCVCGNAEMLPWICASLLQPLGGRCPQAACQDPLLPQGQCCDLCG) form the VWFC domain. Residue N355 is glycosylated (N-linked (GlcNAc...) asparagine). Residues 363–383 (LAGGVAALVLLALLGTVLLLL) traverse the membrane as a helical segment. Over 384–458 (HRSGRLRWRR…LFAGEAEAEA (75 aa)) the chain is Cytoplasmic.

Interacts (via extracellular region) with CUBN/cubilin. This gives rise to a huge complex containing one AMN chain and three CUBN chains. In terms of processing, N-glycosylated. Post-translationally, a soluble form arises by proteolytic removal of the membrane anchor. Expressed in polarized epithelial cells which are specialized in resorption or transport, specifically kidney proximal tubules and intestinal epithelium.

The protein localises to the apical cell membrane. Its subcellular location is the cell membrane. It localises to the endosome membrane. The protein resides in the membrane. It is found in the coated pit. Membrane-bound component of the endocytic receptor formed by AMN and CUBN. Required for normal CUBN glycosylation and trafficking to the cell surface. The complex formed by AMN and CUBN is required for efficient absorption of vitamin B12. Required for normal CUBN-mediated protein transport in the kidney. The chain is Protein amnionless (Amn) from Mus musculus (Mouse).